The chain runs to 196 residues: Protein TEX261 (196 aa).

The next 5 helical transmembrane spans lie at 3-23, 42-62, 70-90, 97-117, and 125-145; these read FMYL…TLAV, SRII…LYVF, IGVG…FPFI, FILS…FFAE, and VLAY…VSLS.

Belongs to the SVP26 family.

The protein localises to the membrane. This Pongo abelii (Sumatran orangutan) protein is Protein TEX261 (TEX261).